The chain runs to 252 residues: Chitooligosaccharide deacetylase (252 aa).

Residues H61 and H125 each coordinate Mg(2+).

This sequence belongs to the YdjC deacetylase family. ChbG subfamily. Homodimer. The cofactor is Mg(2+).

It localises to the cytoplasm. The enzyme catalyses N,N'-diacetylchitobiose + H2O = N-acetyl-beta-D-glucosaminyl-(1-&gt;4)-D-glucosamine + acetate. It carries out the reaction diacetylchitobiose-6'-phosphate + H2O = N'-monoacetylchitobiose-6'-phosphate + acetate. Its pathway is glycan degradation; chitin degradation. Its function is as follows. Involved in the degradation of chitin. ChbG is essential for growth on the acetylated chitooligosaccharides chitobiose and chitotriose but is dispensable for growth on cellobiose and chitosan dimer, the deacetylated form of chitobiose. Deacetylation of chitobiose-6-P and chitotriose-6-P is necessary for both the activation of the chb promoter by the regulatory protein ChbR and the hydrolysis of phosphorylated beta-glucosides by the phospho-beta-glucosidase ChbF. Catalyzes the removal of only one acetyl group from chitobiose-6-P to yield monoacetylchitobiose-6-P, the inducer of ChbR and the substrate of ChbF. This is Chitooligosaccharide deacetylase from Escherichia coli O127:H6 (strain E2348/69 / EPEC).